Here is a 238-residue protein sequence, read N- to C-terminus: MIEANQILAKMKNQKINYDKVLRKIISQWERDGERPKILLHSCCAPCSTYTLEFLTQYADIAIYFANPNIHPKSEYLRRAKVQEQFVNDFNNKTGASVKYIEAEYEPHKFMKMAKDKGLTEEPEGGLRCTACFEMRLEIVAKAALEHGYDYFGSAITLSPKKNAQLINELGMDVQNIYNVKYLPSDFKKNKGYERSIEMCNDYNIFRQCYCGCVFAAMKQGIDFKQINKDAQAFLQQF.

4 residues coordinate [4Fe-4S] cluster: C43, C44, C129, and C132. C211 and C213 form a disulfide bridge.

This sequence belongs to the QueH family.

The catalysed reaction is epoxyqueuosine(34) in tRNA + AH2 = queuosine(34) in tRNA + A + H2O. It participates in tRNA modification; tRNA-queuosine biosynthesis. Catalyzes the conversion of epoxyqueuosine (oQ) to queuosine (Q), which is a hypermodified base found in the wobble positions of tRNA(Asp), tRNA(Asn), tRNA(His) and tRNA(Tyr). This is Epoxyqueuosine reductase QueH from Staphylococcus epidermidis (strain ATCC 12228 / FDA PCI 1200).